The chain runs to 338 residues: Tetraacyldisaccharide 4'-kinase (338 aa).

66-73 contacts ATP; it reads IAGGAGKT.

It belongs to the LpxK family.

It carries out the reaction a lipid A disaccharide + ATP = a lipid IVA + ADP + H(+). It functions in the pathway glycolipid biosynthesis; lipid IV(A) biosynthesis; lipid IV(A) from (3R)-3-hydroxytetradecanoyl-[acyl-carrier-protein] and UDP-N-acetyl-alpha-D-glucosamine: step 6/6. In terms of biological role, transfers the gamma-phosphate of ATP to the 4'-position of a tetraacyldisaccharide 1-phosphate intermediate (termed DS-1-P) to form tetraacyldisaccharide 1,4'-bis-phosphate (lipid IVA). This is Tetraacyldisaccharide 4'-kinase from Delftia acidovorans (strain DSM 14801 / SPH-1).